A 444-amino-acid polypeptide reads, in one-letter code: C4-dicarboxylate transport protein 2 (444 aa).

6 consecutive transmembrane segments (helical) span residues 23 to 43 (ILYV…WLWP), 61 to 81 (LIKM…IAHI), 95 to 115 (LVYF…VANV), 162 to 182 (GEIL…MGLG), 198 to 218 (AMFG…FGAM), and 236 to 256 (LIAT…GIIA).

It belongs to the dicarboxylate/amino acid:cation symporter (DAACS) (TC 2.A.23) family.

The protein localises to the cell inner membrane. In terms of biological role, responsible for the transport of dicarboxylates such as succinate, fumarate, and malate from the periplasm across the membrane. This is C4-dicarboxylate transport protein 2 from Bradyrhizobium diazoefficiens (strain JCM 10833 / BCRC 13528 / IAM 13628 / NBRC 14792 / USDA 110).